A 190-amino-acid chain; its full sequence is Probable calcium-binding protein CML27 (190 aa).

3 consecutive EF-hand domains span residues 27 to 62 (LNALRLRRVFDLFDRNGDGEITLDEMASALDALGLG), 115 to 150 (DDEGDMKEAFRVFDEDGDGFISAAELQAVLKKLGLP), and 153 to 188 (RNLATVQEMICNVDRDCDGRVDFGEFKCMMQGITVW). Ca(2+)-binding residues include Asp-40, Asn-42, Asp-44, Glu-46, Glu-51, Asp-128, Asp-130, Asp-132, Glu-139, Asp-166, Asp-168, Asp-170, Arg-172, and Glu-177.

Functionally, potential calcium sensor. This Oryza sativa subsp. japonica (Rice) protein is Probable calcium-binding protein CML27 (CML27).